The following is a 179-amino-acid chain: Inorganic pyrophosphatase (179 aa).

Positions 30, 44, and 56 each coordinate substrate. Positions 66, 71, and 103 each coordinate Mg(2+). Tyr142 contributes to the substrate binding site.

It belongs to the PPase family. Homohexamer. It depends on Mg(2+) as a cofactor.

The protein resides in the cytoplasm. It catalyses the reaction diphosphate + H2O = 2 phosphate + H(+). In terms of biological role, catalyzes the hydrolysis of inorganic pyrophosphate (PPi) forming two phosphate ions. This is Inorganic pyrophosphatase from Rhodospirillum rubrum (strain ATCC 11170 / ATH 1.1.1 / DSM 467 / LMG 4362 / NCIMB 8255 / S1).